We begin with the raw amino-acid sequence, 562 residues long: MAASAFLLIASFMLVLLLLARPLGSFLARLIEGEPLPALRRVEAAVWRCCGNTTAEMNWWQYALAILWFNLLGLALLFALLMTQGSLPLNPQGFPGLSWDLAFNTAVSFVTNTNWQAYSGESTLSYLSQMAGLAVQNFLSAATGIAVAFALIRAFTRRSSATIGNAWIDVFRITLYVLLPISLLIALFFVSQGTLQNFLPYLHISTLEGAQQTLPMGPVASQEAIKMLGTNGGGFFGVNSAHPFENPTVLTNFVQMLAIFLIPCALCFSFGQVAGENRQGHALIWAMSLIFVVAVVVVMYAELAGNPHLSELGSASNINMEGKESRFGILATSMFSVVTTAASCGAVNAMHDSFTALGGMVPMWLMQIGEVVFGGVGSGLYGMLLFVLLTVFIAGLMIGRTPEYLGKKIDVYDMKMTALAILVTPTLVLLGSALAISTDVGRAGILNPGAHGFSEVLYALSSAANNNGSAFGGLSVNTPFYNLLLAFAMFVGRFGVILPVLAIAGSLCAKKRQPAGNGTLPTYGPLFIGLLVGTVLLVGALTFVPALALGPVAEHLQLWLTK.

The next 12 helical transmembrane spans lie at 6–26, 62–82, 132–152, 170–190, 253–273, 283–303, 327–347, 356–376, 379–399, 416–436, 483–503, and 526–546; these read FLLI…LGSF, YALA…ALLM, GLAV…FALI, VFRI…LFFV, FVQM…FGQV, LIWA…YAEL, FGIL…CGAV, ALGG…FGGV, GLYG…LMIG, MTAL…ALAI, LLLA…VLAI, and LFIG…FVPA.

This sequence belongs to the KdpA family. In terms of assembly, the system is composed of three essential subunits: KdpA, KdpB and KdpC.

The protein localises to the cell inner membrane. In terms of biological role, part of the high-affinity ATP-driven potassium transport (or Kdp) system, which catalyzes the hydrolysis of ATP coupled with the electrogenic transport of potassium into the cytoplasm. This subunit binds the periplasmic potassium ions and delivers the ions to the membrane domain of KdpB through an intramembrane tunnel. This chain is Potassium-transporting ATPase potassium-binding subunit, found in Serratia proteamaculans (strain 568).